Here is a 153-residue protein sequence, read N- to C-terminus: Pheromone-binding protein Gp-9 (153 aa).

The signal sequence occupies residues 1–19 (MKTFVLHIFIFALVAFASA). Cystine bridges form between cysteine 37–cysteine 77, cysteine 73–cysteine 129, and cysteine 118–cysteine 138.

This sequence belongs to the PBP/GOBP family. As to quaternary structure, homodimer.

Its subcellular location is the secreted. Functionally, colony queen number, a major feature of social organization, is associated with worker genotype for Gp-9. Colonies are headed by either a single reproductive queen (monogyne form) or multiple queens (polygyne form). Differences in worker Gp-9 genotypes between social forms may cause differences in workers' abilities to recognize queens and regulate their numbers. In Solenopsis daguerrei (Workerless parasitic ant), this protein is Pheromone-binding protein Gp-9.